Consider the following 632-residue polypeptide: Lipoma-preferred partner homolog (632 aa).

Disordered regions lie at residues 1–118 (MSHP…RSSL) and 135–249 (SSPY…RSYN). A compositionally biased stretch (polar residues) spans 26–40 (THSFGTPSISVSTQQ). Positions 41–53 (PPKKFAPVVAPKP) are enriched in low complexity. N6-acetyllysine is present on Lys-109. Residues Ser-117 and Ser-152 each carry the phosphoserine modification. Residues 144–160 (PGSSSSIASPPVSTPVT) show a composition bias toward low complexity. Composition is skewed to polar residues over residues 172 to 182 (PLTATKKSATK) and 206 to 239 (SYST…SSGQ). A Phosphotyrosine modification is found at Tyr-241. Omega-N-methylarginine is present on Arg-246. Lys-324 is covalently cross-linked (Glycyl lysine isopeptide (Lys-Gly) (interchain with G-Cter in SUMO1)). LIM zinc-binding domains follow at residues 434 to 493 (GRCA…INTL), 494 to 554 (EQCS…KFAP), and 555 to 623 (RCSV…RIRV).

It belongs to the zyxin/ajuba family. Interacts with PDZ domains of SCRIB, with VASP and with ACTN1/alpha-actinin.

It localises to the nucleus. Its subcellular location is the cytoplasm. The protein resides in the cell junction. Functionally, may play a structural role at sites of cell adhesion in maintaining cell shape and motility. In addition to these structural functions, it may also be implicated in signaling events and activation of gene transcription. May be involved in signal transduction from cell adhesion sites to the nucleus allowing successful integration of signals arising from soluble factors and cell-cell adhesion. Also suggested to serve as a scaffold protein upon which distinct protein complexes are assembled in the cytoplasm and in the nucleus. This is Lipoma-preferred partner homolog (Lpp) from Rattus norvegicus (Rat).